Consider the following 439-residue polypeptide: Xaa-Pro dipeptidase (439 aa).

Mn(2+) contacts are provided by D244, D255, H335, E380, and E418.

Belongs to the peptidase M24B family. Bacterial-type prolidase subfamily. Mn(2+) is required as a cofactor.

It catalyses the reaction Xaa-L-Pro dipeptide + H2O = an L-alpha-amino acid + L-proline. Its function is as follows. Splits dipeptides with a prolyl residue in the C-terminal position. The polypeptide is Xaa-Pro dipeptidase (Shewanella frigidimarina (strain NCIMB 400)).